A 653-amino-acid chain; its full sequence is Serine/threonine-protein phosphatase with EF-hands 1 (653 aa).

Residues 16–45 (SLRAALIIQNWYRGYKARLKARQHYALTIF) enclose the IQ domain. Residues 121-455 (IDLLLEAFKE…PRFFQYQVTK (335 aa)) form a catalytic region. Positions 172, 174, 201, and 233 each coordinate Mn(2+). The active-site Proton donor is His234. Mn(2+) is bound by residues His285 and His403. EF-hand domains lie at 483–518 (SRKSDLTRAFQLQDHRKSGKLSVSQWAFCMENILGL), 566–601 (RYRSDLEIIFNAIDTDHSGLISVEEFRAMWKLFSSH), and 606–641 (IDDSQVNKLANIMDLNKDGSIDFNEFLKAFYVVHRY). Asp579, Asp581, Ser583, Glu590, Asp619, Asn621, Asp623, Ser625, and Glu630 together coordinate Ca(2+).

This sequence belongs to the PPP phosphatase family. Mn(2+) serves as cofactor. Mg(2+) is required as a cofactor. In terms of tissue distribution, detected in retina and retinal derived Y-79 retinoblastoma cells. Also found in fetal brain.

It carries out the reaction O-phospho-L-seryl-[protein] + H2O = L-seryl-[protein] + phosphate. The enzyme catalyses O-phospho-L-threonyl-[protein] + H2O = L-threonyl-[protein] + phosphate. Its activity is regulated as follows. Activated by calcium. Its function is as follows. May have a role in the recovery or adaptation response of photoreceptors. May have a role in development. The chain is Serine/threonine-protein phosphatase with EF-hands 1 (PPEF1) from Homo sapiens (Human).